The primary structure comprises 277 residues: MQHETHTHGINMSALGRDKQSLNLERETVAIEVPGLSLFYGEKQALYDVSMNIPKQRVTAFIGPSGCGKSTLLRTFNRMNDLVDGCRVEGAINLYGNNIYRKGEDVAELRRRVGMVFQKPNPFPKTIYENVVYGLRIQGINKKRILDEAVEWALKGAALWDEVKDRLHDSALGLSGGQQQRLVIARTIAVEPEVLLLDEPCSALDPISTLKVEELIYELKSKFTIVIVTHNMQQAARVSDYTAFMYMGKLVEFGDTDTLFTNPAKKQTEDYITGRYG.

The ABC transporter domain occupies 31–272 (IEVPGLSLFY…PAKKQTEDYI (242 aa)). Residue 63–70 (GPSGCGKS) coordinates ATP.

The protein belongs to the ABC transporter superfamily. Phosphate importer (TC 3.A.1.7) family. The complex is composed of two ATP-binding proteins (PstB), two transmembrane proteins (PstC and PstA) and a solute-binding protein (PstS).

The protein localises to the cell inner membrane. The catalysed reaction is phosphate(out) + ATP + H2O = ADP + 2 phosphate(in) + H(+). Part of the ABC transporter complex PstSACB involved in phosphate import. Responsible for energy coupling to the transport system. In Pseudomonas fluorescens (strain Pf0-1), this protein is Phosphate import ATP-binding protein PstB.